The primary structure comprises 571 residues: DDB1- and CUL4-associated factor 11 homolog (571 aa).

The disordered stretch occupies residues 51–75 (RMKPNHSNDSDTDFSSDDEGCPKMT). The segment covering 60 to 69 (SDTDFSSDDE) has biased composition (acidic residues). WD repeat units follow at residues 162-201 (RVAT…SKYR), 266-305 (RDHC…RIRT), 309-349 (AHED…DGDV), 357-396 (GHRD…NMSG), 435-479 (GHSV…VSRR), and 482-521 (GHTA…EGVI).

This sequence belongs to the WD repeat LEC14B family.

Its function is as follows. Involved in regulation of lifespan. Required for dopaminergic CEP neuron degeneration in response to Mn(2+). Inhibits the skn-1-mediated up-regulation of tatn-1. In Caenorhabditis elegans, this protein is DDB1- and CUL4-associated factor 11 homolog.